Here is a 567-residue protein sequence, read N- to C-terminus: Proton-coupled zinc antiporter SLC30A9, mitochondrial (567 aa).

A run of 5 helical transmembrane segments spans residues 238–258 (VVMV…LAWI), 313–333 (GVGI…MGLL), 341–361 (LLWA…TLLV), 391–411 (VILL…TCMG), and 423–443 (SLGS…LIYT). The LXXLL motif signature appears at 461 to 465 (LTELL).

Belongs to the cation diffusion facilitator (CDF) transporter (TC 2.A.4) family. SLC30A subfamily. Interacts with GRIP1, ESR1, AR and CTNNB1.

The protein localises to the mitochondrion membrane. The protein resides in the nucleus. It localises to the endoplasmic reticulum. The catalysed reaction is Zn(2+)(in) + 2 H(+)(out) = Zn(2+)(out) + 2 H(+)(in). In terms of biological role, acts as a zinc transporter involved in intracellular zinc homeostasis. Functions as a secondary coactivator for nuclear receptors by cooperating with p160 coactivators subtypes. Plays a role in transcriptional activation of Wnt-responsive genes. Functionally, mitochondrial proton-coupled zinc ion antiporter mediating the export of zinc from the mitochondria and involved in zinc homeostasis, zinc mobilization as well as mitochondrial morphology and health. In nucleus, functions as a secondary coactivator for nuclear receptors by cooperating with p160 coactivators subtypes. Plays a role in transcriptional activation of Wnt-responsive genes. This Mus musculus (Mouse) protein is Proton-coupled zinc antiporter SLC30A9, mitochondrial (Slc30a9).